The sequence spans 320 residues: Ferrochelatase (320 aa).

Fe cation contacts are provided by H194 and E275.

It belongs to the ferrochelatase family. As to quaternary structure, monomer.

It localises to the cytoplasm. The catalysed reaction is heme b + 2 H(+) = protoporphyrin IX + Fe(2+). The protein operates within porphyrin-containing compound metabolism; protoheme biosynthesis; protoheme from protoporphyrin-IX: step 1/1. Catalyzes the ferrous insertion into protoporphyrin IX. The chain is Ferrochelatase from Escherichia coli O45:K1 (strain S88 / ExPEC).